Here is a 440-residue protein sequence, read N- to C-terminus: 23S rRNA (uracil(1939)-C(5))-methyltransferase RlmD (440 aa).

Residues 6–64 (PIHNAQPEQVFIESLDTEGRGIARVEGKVLFVDGALPGERVWARRTQNHKSFDRAELLQ) enclose the TRAM domain. Cys77, Cys83, Cys86, and Cys164 together coordinate [4Fe-4S] cluster. S-adenosyl-L-methionine-binding residues include Gln273, Phe302, Asn307, Glu323, Asp351, and Asp372. Cys397 functions as the Nucleophile in the catalytic mechanism.

This sequence belongs to the class I-like SAM-binding methyltransferase superfamily. RNA M5U methyltransferase family. RlmD subfamily.

It carries out the reaction uridine(1939) in 23S rRNA + S-adenosyl-L-methionine = 5-methyluridine(1939) in 23S rRNA + S-adenosyl-L-homocysteine + H(+). In terms of biological role, catalyzes the formation of 5-methyl-uridine at position 1939 (m5U1939) in 23S rRNA. The sequence is that of 23S rRNA (uracil(1939)-C(5))-methyltransferase RlmD from Acidithiobacillus ferrooxidans (strain ATCC 23270 / DSM 14882 / CIP 104768 / NCIMB 8455) (Ferrobacillus ferrooxidans (strain ATCC 23270)).